The following is a 371-amino-acid chain: tRNA-specific 2-thiouridylase MnmA (371 aa).

ATP is bound by residues 13–20 (GMSGGVDS) and Met-39. Residues 99-101 (NPD) are interaction with target base in tRNA. Cys-104 functions as the Nucleophile in the catalytic mechanism. Residues Cys-104 and Cys-200 are joined by a disulfide bond. Residue Gly-128 coordinates ATP. Residues 150–152 (KDQ) form an interaction with tRNA region. Cys-200 acts as the Cysteine persulfide intermediate in catalysis. Positions 309-310 (RY) are interaction with tRNA.

Belongs to the MnmA/TRMU family.

It localises to the cytoplasm. The enzyme catalyses S-sulfanyl-L-cysteinyl-[protein] + uridine(34) in tRNA + AH2 + ATP = 2-thiouridine(34) in tRNA + L-cysteinyl-[protein] + A + AMP + diphosphate + H(+). Catalyzes the 2-thiolation of uridine at the wobble position (U34) of tRNA, leading to the formation of s(2)U34. This chain is tRNA-specific 2-thiouridylase MnmA, found in Bacillus subtilis (strain 168).